The chain runs to 251 residues: Pyrroline-5-carboxylate reductase (251 aa).

It belongs to the pyrroline-5-carboxylate reductase family.

The protein localises to the cytoplasm. It carries out the reaction L-proline + NADP(+) = (S)-1-pyrroline-5-carboxylate + NADPH + 2 H(+). It catalyses the reaction L-proline + NAD(+) = (S)-1-pyrroline-5-carboxylate + NADH + 2 H(+). The protein operates within amino-acid biosynthesis; L-proline biosynthesis; L-proline from L-glutamate 5-semialdehyde: step 1/1. Functionally, catalyzes the reduction of 1-pyrroline-5-carboxylate (PCA) to L-proline. This chain is Pyrroline-5-carboxylate reductase (proC), found in Methanobrevibacter smithii.